We begin with the raw amino-acid sequence, 114 residues long: Photosystem II reaction center Psb28 protein (114 aa).

It belongs to the Psb28 family. As to quaternary structure, part of the photosystem II complex.

It localises to the plastid. The protein localises to the chloroplast thylakoid membrane. This chain is Photosystem II reaction center Psb28 protein, found in Gracilaria tenuistipitata var. liui (Red alga).